We begin with the raw amino-acid sequence, 95 residues long: FXYD domain-containing ion transport regulator 6 (95 aa).

The first 18 residues, 1-18 (MELVLVFLCSLLAPMVLA), serve as a signal peptide directing secretion. The Extracellular segment spans residues 19-35 (SAAEKEKEMDPFHYDYQ). The helical transmembrane segment at 36 to 57 (TLRIGGLVFAVVLFSVGILLIL) threads the bilayer. Residues 58-95 (SRRCKCSFNQKPRAPGDEEAQVENLITANATEPQKAEN) lie on the Cytoplasmic side of the membrane. Positions 69–95 (PRAPGDEEAQVENLITANATEPQKAEN) are disordered.

This sequence belongs to the FXYD family. Regulatory subunit of the sodium/potassium-transporting ATPase which is composed of a catalytic alpha subunit, a non-catalytic beta subunit and an additional regulatory subunit. The regulatory subunit, a member of the FXYD protein family, modulates the enzymatic activity in a tissue- and isoform-specific way by changing affinities of the Na+/K+-ATPase toward Na(+), K(+) or ATP.

The protein resides in the cell membrane. Its function is as follows. Associates with and regulates the activity of the sodium/potassium-transporting ATPase (NKA) which catalyzes the hydrolysis of ATP coupled with the exchange of Na(+) and K(+) ions across the plasma membrane. Reduces the apparent affinity for intracellular Na(+) with no change in the apparent affinity for extracellular K(+). In addition to modulating NKA kinetics, may also function as a regulator of NKA localization to the plasma membrane. The chain is FXYD domain-containing ion transport regulator 6 from Homo sapiens (Human).